Consider the following 74-residue polypeptide: UPF0291 protein lmo0496 (74 aa).

The protein belongs to the UPF0291 family.

Its subcellular location is the cytoplasm. This is UPF0291 protein lmo0496 from Listeria monocytogenes serovar 1/2a (strain ATCC BAA-679 / EGD-e).